The chain runs to 1040 residues: Multidrug resistance protein MdtB (1040 aa).

12 helical membrane passes run 16–36 (FIMR…AGII), 347–367 (LMMA…NIPA), 369–389 (IIPG…MVFL), 396–416 (LTLM…IVVI), 440–460 (IGFT…PLLF), 472–492 (FAIT…TLTP), 537–557 (WLTL…WVFI), 863–883 (LGST…VLGI), 888–908 (FIHP…ALLA), 911–931 (IAGS…IGIV), 968–988 (ILMT…STGV), and 998–1018 (IGMV…TPVI).

This sequence belongs to the resistance-nodulation-cell division (RND) (TC 2.A.6) family. MdtB subfamily. As to quaternary structure, part of a tripartite efflux system composed of MdtA, MdtB and MdtC. MdtB forms a heteromultimer with MdtC.

Its subcellular location is the cell inner membrane. The MdtABC tripartite complex confers resistance against novobiocin and deoxycholate. In Escherichia coli O81 (strain ED1a), this protein is Multidrug resistance protein MdtB.